We begin with the raw amino-acid sequence, 146 residues long: Large ribosomal subunit protein uL13 (146 aa).

Belongs to the universal ribosomal protein uL13 family. In terms of assembly, part of the 50S ribosomal subunit.

This protein is one of the early assembly proteins of the 50S ribosomal subunit, although it is not seen to bind rRNA by itself. It is important during the early stages of 50S assembly. This chain is Large ribosomal subunit protein uL13, found in Sulfurisphaera tokodaii (strain DSM 16993 / JCM 10545 / NBRC 100140 / 7) (Sulfolobus tokodaii).